A 302-amino-acid polypeptide reads, in one-letter code: Sulfate adenylyltransferase subunit 2 (302 aa).

It belongs to the PAPS reductase family. CysD subfamily. As to quaternary structure, heterodimer composed of CysD, the smaller subunit, and CysN.

It catalyses the reaction sulfate + ATP + H(+) = adenosine 5'-phosphosulfate + diphosphate. Its pathway is sulfur metabolism; hydrogen sulfide biosynthesis; sulfite from sulfate: step 1/3. Functionally, with CysN forms the ATP sulfurylase (ATPS) that catalyzes the adenylation of sulfate producing adenosine 5'-phosphosulfate (APS) and diphosphate, the first enzymatic step in sulfur assimilation pathway. APS synthesis involves the formation of a high-energy phosphoric-sulfuric acid anhydride bond driven by GTP hydrolysis by CysN coupled to ATP hydrolysis by CysD. This is Sulfate adenylyltransferase subunit 2 from Zymomonas mobilis subsp. mobilis (strain ATCC 31821 / ZM4 / CP4).